Reading from the N-terminus, the 171-residue chain is uncharacterized protein (171 aa).

This is an uncharacterized protein from Bacillus subtilis (strain 168).